The primary structure comprises 198 residues: Recombination protein RecR (198 aa).

Residues 57–72 (CSICCNLSEHDPCPIC) form a C4-type zinc finger. Residues 80–175 (NIVCVVETPQ…KVTRLGYGLP (96 aa)) form the Toprim domain.

This sequence belongs to the RecR family.

Its function is as follows. May play a role in DNA repair. It seems to be involved in an RecBC-independent recombinational process of DNA repair. It may act with RecF and RecO. The protein is Recombination protein RecR of Endomicrobium trichonymphae.